The following is a 169-amino-acid chain: Deoxyuridine 5'-triphosphate nucleotidohydrolase (169 aa).

Over residues 1–10 the composition is skewed to polar residues; the sequence is MAENQINSPE. Positions 1 to 25 are disordered; the sequence is MAENQINSPEITEPSPKVQKLDHPE. Substrate contacts are provided by residues 91 to 93, 105 to 108, glycine 116, arginine 159, and 164 to 165; these read RSG, GVID, and FG.

Belongs to the dUTPase family. In terms of assembly, homodimer. Mg(2+) is required as a cofactor. As to expression, vegetative and floral merismatic cells and provascular and vascular merismatic derivatives.

The catalysed reaction is dUTP + H2O = dUMP + diphosphate + H(+). It participates in pyrimidine metabolism; dUMP biosynthesis; dUMP from dCTP (dUTP route): step 2/2. Its function is as follows. This enzyme is involved in nucleotide metabolism: it produces dUMP, the immediate precursor of thymidine nucleotides and it decreases the intracellular concentration of dUTP so that uracil cannot be incorporated into DNA. It may have as well a metabolic role in merismatic cells. The polypeptide is Deoxyuridine 5'-triphosphate nucleotidohydrolase (Solanum lycopersicum (Tomato)).